The primary structure comprises 82 residues: UPF0154 protein SPD_1662 (82 aa).

The helical transmembrane segment at 5–25 threads the bilayer; it reads LAIVLIVLAFLGGALGGMYLV.

Belongs to the UPF0154 family.

The protein resides in the cell membrane. This chain is UPF0154 protein SPD_1662, found in Streptococcus pneumoniae serotype 2 (strain D39 / NCTC 7466).